We begin with the raw amino-acid sequence, 301 residues long: Quinolinate synthase (301 aa).

Histidine 21 and serine 38 together coordinate iminosuccinate. Cysteine 83 provides a ligand contact to [4Fe-4S] cluster. Iminosuccinate contacts are provided by residues 109-111 (YIN) and serine 126. Cysteine 169 serves as a coordination point for [4Fe-4S] cluster. Iminosuccinate contacts are provided by residues 195 to 197 (HPE) and threonine 212. Residue cysteine 257 coordinates [4Fe-4S] cluster.

The protein belongs to the quinolinate synthase family. Type 2 subfamily. Requires [4Fe-4S] cluster as cofactor.

It localises to the cytoplasm. The catalysed reaction is iminosuccinate + dihydroxyacetone phosphate = quinolinate + phosphate + 2 H2O + H(+). The protein operates within cofactor biosynthesis; NAD(+) biosynthesis; quinolinate from iminoaspartate: step 1/1. Catalyzes the condensation of iminoaspartate with dihydroxyacetone phosphate to form quinolinate. The polypeptide is Quinolinate synthase (Clostridium perfringens (strain SM101 / Type A)).